Here is a 251-residue protein sequence, read N- to C-terminus: Zinc import ATP-binding protein ZnuC (251 aa).

Positions 5 to 220 (VSLENVSVSF…PEFISMFGPR (216 aa)) constitute an ABC transporter domain. Residue 37–44 (GPNGAGKS) coordinates ATP.

Belongs to the ABC transporter superfamily. Zinc importer (TC 3.A.1.15.5) family. The complex is composed of two ATP-binding proteins (ZnuC), two transmembrane proteins (ZnuB) and a solute-binding protein (ZnuA).

The protein resides in the cell inner membrane. The catalysed reaction is Zn(2+)(out) + ATP(in) + H2O(in) = Zn(2+)(in) + ADP(in) + phosphate(in) + H(+)(in). Part of the ABC transporter complex ZnuABC involved in zinc import. Responsible for energy coupling to the transport system. The polypeptide is Zinc import ATP-binding protein ZnuC (Salmonella typhi).